A 110-amino-acid chain; its full sequence is Small ribosomal subunit protein bS16 (110 aa).

Positions 84-110 (KREARNNPEKAVPRKERKAAAEAAAKK) are disordered.

Belongs to the bacterial ribosomal protein bS16 family.

The sequence is that of Small ribosomal subunit protein bS16 from Rhodopseudomonas palustris (strain BisB18).